Consider the following 515-residue polypeptide: MPTVVVMDVSLSMTRPVSVEGSEEYQRKHLAAHGLTMLFEHMATNYKLEFTALVVFSSLWELMVPFTRDYNTLQEALSNMDDYDKTCLESALVGVCNIVQQEWGGAIPCQVVLVTDGCLGIGRGSLRHSLATQNQRSESNRFPLPFPFPSKLYVMCMANLEELQSTDSLECLERLIDLNNGEGQIFTIDGPLCLKNVQSMFGKLIDLAYTPFHAVLKCGHLTADVQVFPRPEPFVIDEEIDPIPKVINTDLEIVGFIDIADISSPPVLSRHLVLPIALNKEGDEVGAGITDDNEDENSANQIAGKIPNFCVLLHGSLKVEGMVALVQLGPEWHGMLYSQADSKKKSNLMMSLFEPGPEPLPWLGKMAQLGPISDAKENPYGEDDNKSPFPLQPKNKRSYAQNVTVWIKPSGLQTDVQKILRNARKLPEKTQTFYKELNRLRKAALAFGFLDLLKGVADMLERECTLLPDTAHPDAAFQLTHAAQQLKLASTEYAIYDHNITPLHTDFSGSSTERM.

The VWFA domain maps to 2-204 (PTVVVMDVSL…KNVQSMFGKL (203 aa)). Residues S10, S12, and T86 each coordinate Mg(2+). At K418 the chain carries N6-acetyllysine.

This sequence belongs to the Integrator subunit 14 family. In terms of assembly, component of the Integrator complex, composed of core subunits INTS1, INTS2, INTS3, INTS4, INTS5, INTS6, INTS7, INTS8, INTS9/RC74, INTS10, INTS11/CPSF3L, INTS12, INTS13, INTS14 and INTS15. The core complex associates with protein phosphatase 2A subunits PPP2CA and PPP2R1A, to form the Integrator-PP2A (INTAC) complex. INTS14 is part of the tail subcomplex, composed of INTS10, INTS13, INTS14 and INTS15.

It is found in the nucleus. Component of the integrator complex, a multiprotein complex that terminates RNA polymerase II (Pol II) transcription in the promoter-proximal region of genes. The integrator complex provides a quality checkpoint during transcription elongation by driving premature transcription termination of transcripts that are unfavorably configured for transcriptional elongation: the complex terminates transcription by (1) catalyzing dephosphorylation of the C-terminal domain (CTD) of Pol II subunit POLR2A/RPB1 and SUPT5H/SPT5, (2) degrading the exiting nascent RNA transcript via endonuclease activity and (3) promoting the release of Pol II from bound DNA. The integrator complex is also involved in terminating the synthesis of non-coding Pol II transcripts, such as enhancer RNAs (eRNAs), small nuclear RNAs (snRNAs), telomerase RNAs and long non-coding RNAs (lncRNAs). Within the integrator complex, INTS14 is part of the integrator tail module that acts as a platform for the recruitment of transcription factors at promoters. The sequence is that of Integrator complex subunit 14 from Mus musculus (Mouse).